Here is a 77-residue protein sequence, read N- to C-terminus: Large ribosomal subunit protein bL28 (77 aa).

Belongs to the bacterial ribosomal protein bL28 family.

The sequence is that of Large ribosomal subunit protein bL28 from Polynucleobacter necessarius subsp. necessarius (strain STIR1).